The chain runs to 699 residues: Elongation factor G (699 aa).

One can recognise a tr-type G domain in the interval 8–283; that stretch reads EHIRNIGICA…AIVDFLPSPI (276 aa). GTP contacts are provided by residues 17–24, 81–85, and 135–138; these read AHIDAGKT, DTPGH, and NKMD.

The protein belongs to the TRAFAC class translation factor GTPase superfamily. Classic translation factor GTPase family. EF-G/EF-2 subfamily.

It localises to the cytoplasm. Functionally, catalyzes the GTP-dependent ribosomal translocation step during translation elongation. During this step, the ribosome changes from the pre-translocational (PRE) to the post-translocational (POST) state as the newly formed A-site-bound peptidyl-tRNA and P-site-bound deacylated tRNA move to the P and E sites, respectively. Catalyzes the coordinated movement of the two tRNA molecules, the mRNA and conformational changes in the ribosome. This chain is Elongation factor G, found in Rickettsia typhi (strain ATCC VR-144 / Wilmington).